A 469-amino-acid chain; its full sequence is UDP-N-acetylmuramoylalanine--D-glutamate ligase (469 aa).

An ATP-binding site is contributed by 123–129; it reads GTNGKST.

This sequence belongs to the MurCDEF family.

It localises to the cytoplasm. It carries out the reaction UDP-N-acetyl-alpha-D-muramoyl-L-alanine + D-glutamate + ATP = UDP-N-acetyl-alpha-D-muramoyl-L-alanyl-D-glutamate + ADP + phosphate + H(+). It functions in the pathway cell wall biogenesis; peptidoglycan biosynthesis. Cell wall formation. Catalyzes the addition of glutamate to the nucleotide precursor UDP-N-acetylmuramoyl-L-alanine (UMA). This Phenylobacterium zucineum (strain HLK1) protein is UDP-N-acetylmuramoylalanine--D-glutamate ligase.